The following is a 584-amino-acid chain: Probable lysosomal cobalamin transporter (584 aa).

Helical transmembrane passes span leucine 8–valine 28, isoleucine 46–valine 66, threonine 93–phenylalanine 113, threonine 144–alanine 164, alanine 189–serine 209, leucine 313–threonine 333, isoleucine 350–valine 370, valine 376–isoleucine 396, alanine 421–valine 441, and glycine 509–isoleucine 529.

It belongs to the LIMR family. LMBRD1 subfamily.

It localises to the lysosome membrane. Probable lysosomal cobalamin transporter. Required to export cobalamin from lysosomes allowing its conversion to cofactors. This is Probable lysosomal cobalamin transporter from Coccidioides immitis (strain RS) (Valley fever fungus).